The chain runs to 283 residues: Acetylglutamate kinase (283 aa).

Substrate contacts are provided by residues glycine 64 to glycine 65, arginine 86, and asparagine 181.

This sequence belongs to the acetylglutamate kinase family. ArgB subfamily.

The protein resides in the cytoplasm. The catalysed reaction is N-acetyl-L-glutamate + ATP = N-acetyl-L-glutamyl 5-phosphate + ADP. It participates in amino-acid biosynthesis; L-arginine biosynthesis; N(2)-acetyl-L-ornithine from L-glutamate: step 2/4. In terms of biological role, catalyzes the ATP-dependent phosphorylation of N-acetyl-L-glutamate. The chain is Acetylglutamate kinase from Sulfurovum sp. (strain NBC37-1).